Here is a 236-residue protein sequence, read N- to C-terminus: 2,3,4,5-tetrahydropyridine-2,6-dicarboxylate N-acetyltransferase (236 aa).

It belongs to the transferase hexapeptide repeat family. DapH subfamily.

The enzyme catalyses (S)-2,3,4,5-tetrahydrodipicolinate + acetyl-CoA + H2O = L-2-acetamido-6-oxoheptanedioate + CoA. The protein operates within amino-acid biosynthesis; L-lysine biosynthesis via DAP pathway; LL-2,6-diaminopimelate from (S)-tetrahydrodipicolinate (acetylase route): step 1/3. Its function is as follows. Catalyzes the transfer of an acetyl group from acetyl-CoA to tetrahydrodipicolinate. This is 2,3,4,5-tetrahydropyridine-2,6-dicarboxylate N-acetyltransferase from Geobacillus thermodenitrificans (strain NG80-2).